The chain runs to 510 residues: Secreted RxLR effector protein 108 (510 aa).

The signal sequence occupies residues 1–20; sequence MRGAYYVLTALFVVTSSDIA. N47 carries N-linked (GlcNAc...) asparagine glycosylation. Residues 48–65 carry the RxLR-dEER motif; the sequence is RSLRGSRDGRNDLANEER. 2 disordered regions span residues 111–139 and 386–442; these read RAAKAVEEKSRPAKAAKKTPRAAKAAKKT and KRSR…DDPK. Residues 122-137 show a composition bias toward basic residues; it reads PAKAAKKTPRAAKAAK. Residues 393-405 show a composition bias toward polar residues; sequence DGNTDTASLPSKQ. A compositionally biased stretch (basic and acidic residues) spans 429–442; it reads VPTKEIKSSFDDPK.

Belongs to the RxLR effector family.

The protein localises to the secreted. The protein resides in the host nucleus. Functionally, secreted effector that completely suppresses the host cell death induced by cell death-inducing proteins. This is Secreted RxLR effector protein 108 from Plasmopara viticola (Downy mildew of grapevine).